An 893-amino-acid polypeptide reads, in one-letter code: UPF0182 protein CLD_0809 (893 aa).

Helical transmembrane passes span 9-29, 49-69, 94-114, 154-174, 202-222, 246-266, and 273-293; these read IPLFIIILFIAFFNKIINFII, AIIILMIPIFIIFFISIWMYY, LFFIFNFIVSIFLAYIFSSSY, VIISLLLFLVITTFIAYFILE, LAIVSGLIILFISFGHLIKIW, FYKIIVVITLISSIVTLLSIV, and VSICIGITIFLIVSQNIASFL.

It belongs to the UPF0182 family.

Its subcellular location is the cell membrane. This Clostridium botulinum (strain Okra / Type B1) protein is UPF0182 protein CLD_0809.